The primary structure comprises 419 residues: MDRISQLSDDLLLQILSFIPGKDVVATSLLSKRWQSLWMLVSELEYDDSYHTGDYKSFSQFVYRSLLSNNAPVIKHLHLNLGPDCPAIDIGLWIGFALTRRLRQLKINIRTSSNDASFSLPSSLYTSDTLETLRLINFVLLDVPSSVCLPSLKVLHLKTVDYEDDASLPSLLFGCPNLEELFVERHDQDLEMDVTFVVPSLRRLSMIDKNYGQCDRYVIDVPSLKYLNITDDAVYDVRQIENMPELVEAHVDITQGVTHKFLRALTSVRQLSLCLSLSEVMCPSGIIFSQLVHLNLSTVVKGWWDLLTSMLQDSPKLQSLKLIDKQHESGLCGIETPIGWKLPSSVPECLLFSLEAFEWIGYKGRRGDREVATYVLKNAACLRTAKFSPESTDVGEKYHMLKELASVPTASTSSKLLFD.

One can recognise an F-box domain in the interval 1 to 53 (MDRISQLSDDLLLQILSFIPGKDVVATSLLSKRWQSLWMLVSELEYDDSYHTG). LRR repeat units follow at residues 55 to 81 (YKSF…HLNL), 132 to 159 (TLRL…HLKT), 160 to 185 (VDYE…FVER), 187 to 208 (DQDL…SMID), 226 to 253 (YLNI…HVDI), 254 to 284 (TQGV…MCPS), and 299 to 324 (VVKG…KLID). An FBD domain is found at 339–389 (GWKLPSSVPECLLFSLEAFEWIGYKGRRGDREVATYVLKNAACLRTAKFSP).

This chain is F-box/FBD/LRR-repeat protein At4g26340, found in Arabidopsis thaliana (Mouse-ear cress).